A 412-amino-acid chain; its full sequence is CCA-adding enzyme (412 aa).

Residues S41 and K44 each coordinate ATP. The CTP site is built by S41 and K44. Mg(2+) is bound by residues D53, D55, and D106. ATP is bound by residues H129, K149, and Y158. 3 residues coordinate CTP: H129, K149, and Y158.

This sequence belongs to the tRNA nucleotidyltransferase/poly(A) polymerase family. Archaeal CCA-adding enzyme subfamily. Homodimer. Mg(2+) is required as a cofactor.

It carries out the reaction a tRNA precursor + 2 CTP + ATP = a tRNA with a 3' CCA end + 3 diphosphate. The catalysed reaction is a tRNA with a 3' CCA end + 2 CTP + ATP = a tRNA with a 3' CCACCA end + 3 diphosphate. Catalyzes the addition and repair of the essential 3'-terminal CCA sequence in tRNAs without using a nucleic acid template. Adds these three nucleotides in the order of C, C, and A to the tRNA nucleotide-73, using CTP and ATP as substrates and producing inorganic pyrophosphate. tRNA 3'-terminal CCA addition is required both for tRNA processing and repair. Also involved in tRNA surveillance by mediating tandem CCA addition to generate a CCACCA at the 3' terminus of unstable tRNAs. While stable tRNAs receive only 3'-terminal CCA, unstable tRNAs are marked with CCACCA and rapidly degraded. The protein is CCA-adding enzyme of Saccharolobus islandicus (strain Y.G.57.14 / Yellowstone #1) (Sulfolobus islandicus).